The following is a 682-amino-acid chain: Glucan endo-1,3-beta-glucosidase A1 (682 aa).

An N-terminal signal peptide occupies residues 1–38 (MKPSHFTEKRFMKKVLGLFLVVVMLASVGVLPTSKVQA). A GH16 domain is found at 391–682 (YTFIGNPNAP…VDYVRVYKEQ (292 aa)). Catalysis depends on E552, which acts as the Nucleophile. E557 acts as the Proton donor in catalysis.

It belongs to the glycosyl hydrolase 16 family.

It localises to the secreted. It catalyses the reaction Hydrolysis of (1-&gt;3)-beta-D-glucosidic linkages in (1-&gt;3)-beta-D-glucans.. Its function is as follows. Lysis of cellular walls containing beta-1,3-glucans. Implicated in the defense against fungal pathogens. This chain is Glucan endo-1,3-beta-glucosidase A1 (glcA), found in Niallia circulans (Bacillus circulans).